We begin with the raw amino-acid sequence, 206 residues long: GTP cyclohydrolase 1 (206 aa).

Zn(2+)-binding residues include C98, H101, and C169.

Belongs to the GTP cyclohydrolase I family. Toroid-shaped homodecamer, composed of two pentamers of five dimers.

It carries out the reaction GTP + H2O = 7,8-dihydroneopterin 3'-triphosphate + formate + H(+). It participates in cofactor biosynthesis; 7,8-dihydroneopterin triphosphate biosynthesis; 7,8-dihydroneopterin triphosphate from GTP: step 1/1. The protein is GTP cyclohydrolase 1 of Helicobacter hepaticus (strain ATCC 51449 / 3B1).